We begin with the raw amino-acid sequence, 335 residues long: Leukocyte cell-derived chemotaxin-2 homolog (335 aa).

The signal sequence occupies residues 1–20; the sequence is MHLRTLHFLILIGIFIGGQT. 2 disulfides stabilise this stretch: cysteine 28/cysteine 66 and cysteine 39/cysteine 46. Position 63 (aspartate 63) interacts with Zn(2+). Asparagine 317 carries an N-linked (GlcNAc...) asparagine glycan.

Belongs to the LECT2/MIM-1 family. As to quaternary structure, component of a multi-protein dma-1 receptor-ligand complex, which is activated upon binding of lect-2, mnr-1 and sax-7 ligands to promote the morphogenesis of dendrites which extend from the PVD neuronal body. Within the complex interacts with sax-7; the interaction is required for lect-2 dendritic localization and enhances the binding of the mnr-1 and sax-7 ligands to the dma-1 receptor-ligand complex. As to expression, expressed in body wall muscle cells, along the boundary of the lateral hypodermis, seam cells, processes of the nervous system including commissures, sensory dendrites in the head, and lateral nerve tracts, and motor neurons and some mechanosensory neurons such as ALM.

The protein resides in the secreted. It localises to the cell junction. The protein localises to the extracellular space. Its subcellular location is the extracellular matrix. It is found in the basement membrane. The protein resides in the cell projection. It localises to the dendrite. The protein localises to the perikaryon. Its subcellular location is the cell surface. Its function is as follows. Muscle-derived dendritic guidance cue, which is required for the formation of somatosensory dendritic arbors which extend from PVD and FLP sensory neurons during development. Ligand of a multi-protein dma-1 receptor-ligand complex, which is activated upon binding of lect-2, mnr-1 and sax-7 ligands to control the growth of dendrites that extend anteriorly from the PVD neuronal cell body. Enhances the binding of the mnr-1 and sax-7 ligands to the dma-1 receptor-ligand complex. Restricts the growth of secondary PVD dendritic branches and any irregularly positioned ectopic tertiary dendritic branches that originate from secondary branches, and promotes the formation of stable higher order dendritic branches. In particular, it is required for the formation of quaternary PVD dendritic branches and promotes their innervation of body wall muscles. Promotes self-avoidance of tertiary dendritic branches of PVD sensory neurons. Not required for the growth of dendrites that extend from AIY and PVQ interneurons, DVB GABergic neurons, PLM and ALM mechanosensory neurons, AFD sensory neurons and DD/VD and DA/DB motor neurons. The chain is Leukocyte cell-derived chemotaxin-2 homolog from Caenorhabditis elegans.